The primary structure comprises 98 residues: Protein Asterix (98 aa).

Helical transmembrane passes span 32–52 and 78–98; these read LFSI…CLWV and VSLS…NLFV.

The protein belongs to the Asterix family.

The protein localises to the membrane. This Dictyostelium discoideum (Social amoeba) protein is Protein Asterix.